The primary structure comprises 20 residues: Transcriptional regulatory protein PufK (20 aa).

Residues 1–11 (MVPYRNPRHQH) are compositionally biased toward basic residues. The segment at 1-20 (MVPYRNPRHQHVASVLRSGG) is disordered.

Involved in the transcriptional regulation of pufB. The polypeptide is Transcriptional regulatory protein PufK (pufK) (Cereibacter sphaeroides (strain ATCC 17023 / DSM 158 / JCM 6121 / CCUG 31486 / LMG 2827 / NBRC 12203 / NCIMB 8253 / ATH 2.4.1.) (Rhodobacter sphaeroides)).